We begin with the raw amino-acid sequence, 704 residues long: MMGPKANAAAAGDLPEYAEVDPTGRYGRYNDVLGKGASKTVYRAFDEYQGMEVAWNQVKLHDFLQSPEDLERLYCEIHLLKTLKHRNIMKFYTSWVDVSRRNINFITEMFTSGTLRQYRQKHMRVNIWAVKHWCRQILSGLLYLHSHDPPIIHRDLKCDNIFVNGNQGEVKIGDLGLAAILRKSHAVHCVGTPEFMAPEVYEEEYNELVDIYSFGMCVLEMVTFEYPYSECTHPVQIYKKVISGTKPEALYKVKDPMVRQFVEKCLATASRRLSARELLKDPFLQVDDLVFCPGDGDYSLMNYLRQPYLEHAYSNVSMMSNGLSESIDEDTPTEDRWDCEDDDIKADGIDLFNGHEDEPLGNVDITIKGRKSEDGSIFLRLRIADNDGHVRNIYFPFDIEADTALSVATEMVAELDITDHEVTRIAEMIDGEVSALVPDWRPGPGIEESQDTTYCHNCGSNVSSCGSLYAYMSSAARGCQCAELHGRFEEITFQANGEQTDLQDSGGSSDDGGGQTQHVKDQEAVHSNGFVQMGRRGPRDQFCFSSFQEQSCSPRHYEYDTSLQAKGFDMKHEVKMAKYKARKMAHLRRAIHPSLDFDNLNGERRMKSSLNKLQSFHIGKNHNFRIPTCERSPGARDAEEDPDIFNLAYHSRHPDPGAQRARHCEVDAQSSPDLMFTARSYYTGAQLPTNLPRTKSVTLNAVDA.

The 258-residue stretch at 27 to 284 (GRYNDVLGKG…ARELLKDPFL (258 aa)) folds into the Protein kinase domain. ATP is bound by residues 107 to 110 (TEMF) and Lys157. Asp174 serves as the catalytic Proton acceptor. The segment at 499-521 (QTDLQDSGGSSDDGGGQTQHVKD) is disordered.

The protein belongs to the protein kinase superfamily. Ser/Thr protein kinase family. WNK subfamily.

It carries out the reaction L-seryl-[protein] + ATP = O-phospho-L-seryl-[protein] + ADP + H(+). The enzyme catalyses L-threonyl-[protein] + ATP = O-phospho-L-threonyl-[protein] + ADP + H(+). In Oryza sativa subsp. japonica (Rice), this protein is Probable serine/threonine-protein kinase WNK1 (WNK1).